We begin with the raw amino-acid sequence, 224 residues long: Small ribosomal subunit protein uS3 (224 aa).

Residues Leu-38 to Arg-106 form the KH type-2 domain.

The protein belongs to the universal ribosomal protein uS3 family. In terms of assembly, part of the 30S ribosomal subunit. Forms a tight complex with proteins S10 and S14.

Its function is as follows. Binds the lower part of the 30S subunit head. Binds mRNA in the 70S ribosome, positioning it for translation. This is Small ribosomal subunit protein uS3 from Anaeromyxobacter sp. (strain Fw109-5).